The chain runs to 495 residues: MGSVYVNFFEEYPDTSYIKIPNNPLDRVIGQDEAVRIASVAARQRRHLLLVGPPGVGKSMIAQALSFYIGRPNEEIRVVHNPQYPERPFVEIKTREEVMLEREEESSTSGTLIDPKDAPTSVAERLGYRCSKCGFYSSPTEMVCPNCNSPKAQIGTQGPFGDVFNVIGAAFGVQNNVDKVTLTRRNGDHDEIVVYERYNDKIRVLDEKTLERRRRLEKKSPSKTIVPIDRNPFVLATGASETELLGDVRHDPYGGHPQLGTLPYERVIAGAVHEAHEGVLFIDEITHLGNLQRYILTAMQEKVFPITGRNPQSAGASVRVDKVPADFILVAACNINDLPYILSPLRSRIVGNGYEILMKTTMKDTEENRMKYLQFIAQEINMDGKIPHMTMDAAQLIIEEGRKRAKLIDRKNNELTLRLRELGGLIRAAGDIAVFKGNKLIDKEDVEEAIKLYVPVEEKIMKEYGSMAAAYSSETTGSQRDSTYNYANMDDRSYE.

52–59 contacts ATP; sequence GPPGVGKS. Residues 471–495 form a disordered region; it reads YSSETTGSQRDSTYNYANMDDRSYE. Residues 472–486 are compositionally biased toward polar residues; it reads SSETTGSQRDSTYNY.

This sequence belongs to the peptidase S16 family.

The protein is Putative lon protease homolog of Thermoplasma volcanium (strain ATCC 51530 / DSM 4299 / JCM 9571 / NBRC 15438 / GSS1).